A 357-amino-acid chain; its full sequence is Arginine kinase (357 aa).

Residue A2 is modified to N-acetylalanine. The 83-residue stretch at 9–91 (KLEEGFKKLE…FDPIIEDYHK (83 aa)) folds into the Phosphagen kinase N-terminal domain. 64-68 (GVGVY) serves as a coordination point for L-arginine. In terms of domain architecture, Phosphagen kinase C-terminal spans 119–356 (FVISTRVRCG…LELIKIEKEM (238 aa)). Residues 122–126 (STRVR) and H185 contribute to the ATP site. E225 contributes to the L-arginine binding site. ATP is bound at residue R229. Residue C271 coordinates L-arginine. ATP contacts are provided by residues 280 to 284 (RASVH) and 309 to 314 (RGTRGE). E314 contacts L-arginine.

Belongs to the ATP:guanido phosphotransferase family.

The catalysed reaction is L-arginine + ATP = N(omega)-phospho-L-arginine + ADP + H(+). This Callinectes sapidus (Blue crab) protein is Arginine kinase.